A 623-amino-acid chain; its full sequence is MTGPIVYVQNADGIFFKLAEGKGTNDAVIHLANQDQGVRVLGAEEFPVQGEVVKIASLMGFIKLKLNRYAIIANTVEETGRFNGHVFYRVLQHSIVSTKFNSRIDSEEAEYIKLLELHLKNSTFYFSYTYDLTNSLQRNEKVGPAASWKTADERFFWNHYLTEDLRNFAHQDPRIDSFIQPVIYGYAKTVDAVLNATPIVLGLITRRSIFRAGTRYFRRGVDKDGNVGNFNETEQILLAENPESEKIHVFSFLQTRGSVPIYWAEINNLKYKPNLVLGENSLDATKKHFDQQKELYGDNYLVNLVNQKGHELPVKEGYESVVHALNDPKIHYVYFDFHHECRKMQWHRVKLLIDHLEKLGLSNEDFFHKVIDSNGNTVEIVNEQHSVVRTNCMDCLDRTNVVQSVLAQWVLQKEFESADVVATGSTWEDNAPLLTSYQNLWADNADAVSVAYSGTGALKTDFTRTGKRTRLGAFNDFLNSASRYYQNNWTDGPRQDSYDLFLGGFRPHTASIKSPFPDRRPVYIQLIPMIICAALTVLGATIFFPKDRFTSSKNLLYFAGASIVLALSTKFMFKNGIQFVNWPKLVDVGFLVVHQTHDKEQQFKGLKYAQSPKFSKPDPLKRD.

Residues 1 to 523 (MTGPIVYVQN…SPFPDRRPVY (523 aa)) are Cytoplasmic-facing. The 340-residue stretch at 115–454 (LELHLKNSTF…ADAVSVAYSG (340 aa)) folds into the SAC domain. Residues Lys-246 and Lys-358 each participate in a glycyl lysine isopeptide (Lys-Gly) (interchain with G-Cter in ubiquitin) cross-link. A helical membrane pass occupies residues 524-544 (IQLIPMIICAALTVLGATIFF). Residues 545–552 (PKDRFTSS) are Lumenal-facing. Residues 553–573 (KNLLYFAGASIVLALSTKFMF) traverse the membrane as a helical segment. The Cytoplasmic segment spans residues 574 to 623 (KNGIQFVNWPKLVDVGFLVVHQTHDKEQQFKGLKYAQSPKFSKPDPLKRD).

Component of the SPOTS complex, at least composed of LCB1/2 (LCB1 and/or LCB2), ORM1/2 (ORM1 and/or ORM2), SAC1 and TSC3.

It is found in the endoplasmic reticulum membrane. The protein resides in the golgi apparatus membrane. It carries out the reaction a 1,2-diacyl-sn-glycero-3-phospho-(1D-myo-inositol-3-phosphate) + H2O = a 1,2-diacyl-sn-glycero-3-phospho-(1D-myo-inositol) + phosphate. The enzyme catalyses a 1,2-diacyl-sn-glycero-3-phospho-(1D-myo-inositol 4-phosphate) + H2O = a 1,2-diacyl-sn-glycero-3-phospho-(1D-myo-inositol) + phosphate. Phosphoinositide phosphatase which catalyzes the hydrolysis of phosphatidylinositol 3-phosphate (PtdIns(3)P) and phosphatidylinositol 4-phosphate (PtdIns(4)P). Has low activity towards phosphatidylinositol-3,5-bisphosphate (PtdIns(3,5)P2). May be involved in the coordination of the activities of the secretory pathway and the actin cytoskeleton. The chain is Phosphatidylinositol-3-phosphatase SAC1 (SAC1) from Saccharomyces cerevisiae (strain ATCC 204508 / S288c) (Baker's yeast).